A 336-amino-acid polypeptide reads, in one-letter code: Probable allantoicase (336 aa).

This sequence belongs to the allantoicase family.

The enzyme catalyses allantoate + H2O = (S)-ureidoglycolate + urea. Its pathway is nitrogen metabolism; (S)-allantoin degradation; (S)-ureidoglycolate from allantoate (aminidohydrolase route): step 1/1. In Acinetobacter baumannii (strain ATCC 17978 / DSM 105126 / CIP 53.77 / LMG 1025 / NCDC KC755 / 5377), this protein is Probable allantoicase.